The following is a 421-amino-acid chain: Synaptotagmin-12 (421 aa).

The Vesicular segment spans residues 1 to 18 (MAVDVAEYHLSVIKSPPG). Residues 19–39 (WEVGVYAAGALALLGIAAVSL) form a helical membrane-spanning segment. Residues 40–421 (WKLWTSGSFP…VSMWHAVRRN (382 aa)) are Cytoplasmic-facing. 3 positions are modified to phosphoserine: serine 97, serine 99, and serine 214. 2 C2 domains span residues 152–272 (TLGQ…SGWL) and 283–416 (AVGE…SMWH).

It belongs to the synaptotagmin family. Homodimer. Can also form heterodimers. Interacts with SYT1. In terms of processing, phosphorylation of Ser-97 is required for mossy-fiber long-term potentiation.

It localises to the cytoplasmic vesicle. Its subcellular location is the secretory vesicle. The protein localises to the synaptic vesicle membrane. Synaptic vesicle phosphoprotein that enhances spontaneous neurotransmitter release but does not effect induced neurotransmitter release. Unlike other synaptotagmins, it does not bind Ca(2+) or phospholipids. Essential for mossy-fiber long-term potentiation in the hippocampus. This chain is Synaptotagmin-12 (SYT12), found in Homo sapiens (Human).